The primary structure comprises 100 residues: Proline-rich protein 15-like protein (100 aa).

Residues 29–51 are disordered; that stretch reads YAQTEGGAEPPGPDAGDPHSDFN.

Belongs to the PRR15 family.

The protein is Proline-rich protein 15-like protein (Prr15l) of Mus musculus (Mouse).